The following is a 105-amino-acid chain: Urease subunit beta (105 aa).

This sequence belongs to the urease beta subunit family. As to quaternary structure, heterotrimer of UreA (gamma), UreB (beta) and UreC (alpha) subunits. Three heterotrimers associate to form the active enzyme.

Its subcellular location is the cytoplasm. The enzyme catalyses urea + 2 H2O + H(+) = hydrogencarbonate + 2 NH4(+). It functions in the pathway nitrogen metabolism; urea degradation; CO(2) and NH(3) from urea (urease route): step 1/1. The sequence is that of Urease subunit beta from Marinomonas sp. (strain MWYL1).